The following is a 467-amino-acid chain: Amino-acid permease RocE (467 aa).

Helical transmembrane passes span 21–41, 47–67, 87–107, 122–142, 162–182, 207–227, 246–266, 283–303, 336–356, 361–381, 409–429, and 435–455; these read FMIS…GFTI, LGAV…MLCL, FISP…WAVT, WFPH…MFIL, ILII…LIDL, MLIT…IGVA, VWRT…MIPW, IGIP…LLSV, VPMY…LTKF, TVYM…WITI, YPVL…SLAF, and IALY…HVVI.

This sequence belongs to the amino acid-polyamine-organocation (APC) superfamily. Amino acid transporter (AAT) (TC 2.A.3.1) family.

It is found in the cell membrane. Putative transport protein involved in arginine degradative pathway. Probably transports arginine or ornithine. This is Amino-acid permease RocE from Bacillus subtilis (strain 168).